The sequence spans 266 residues: Pyridoxal phosphate phosphatase YigL (266 aa).

Asp8 serves as the catalytic Nucleophile. Residue Asp8 participates in Mg(2+) binding. Phosphate is bound at residue Leu9. Asp10 provides a ligand contact to Mg(2+). Residues 42–43 and Lys191 each bind phosphate; that span reads TG. A Mg(2+)-binding site is contributed by Asp214. Asn217 is a phosphate binding site.

The protein belongs to the HAD-like hydrolase superfamily. Cof family. Mg(2+) serves as cofactor. Mn(2+) is required as a cofactor. It depends on Co(2+) as a cofactor. Requires Zn(2+) as cofactor.

It catalyses the reaction pyridoxal 5'-phosphate + H2O = pyridoxal + phosphate. The catalysed reaction is sugar phosphate + H2O = sugar + phosphate.. Catalyzes Strongly the dephosphorylation of pyridoxal-phosphate (PLP) and moderately the dephosphorylation of 2-deoxyglucose 6-phosphate (2bGLU6P) and beta-glucose 6-phosphate (bGlu6P). Also hydrolyzes both purines (GMP and IMP) and pyrimidines as secondary substrates. In Escherichia coli (strain K12), this protein is Pyridoxal phosphate phosphatase YigL (yigL).